Consider the following 336-residue polypeptide: tRNA N6-adenosine threonylcarbamoyltransferase (336 aa).

Positions 114 and 118 each coordinate Fe cation. Substrate contacts are provided by residues 136-140, D169, G182, D186, and N275; that span reads LVSGG. D301 contributes to the Fe cation binding site.

It belongs to the KAE1 / TsaD family. Fe(2+) is required as a cofactor.

It localises to the cytoplasm. It catalyses the reaction L-threonylcarbamoyladenylate + adenosine(37) in tRNA = N(6)-L-threonylcarbamoyladenosine(37) in tRNA + AMP + H(+). Required for the formation of a threonylcarbamoyl group on adenosine at position 37 (t(6)A37) in tRNAs that read codons beginning with adenine. Is involved in the transfer of the threonylcarbamoyl moiety of threonylcarbamoyl-AMP (TC-AMP) to the N6 group of A37, together with TsaE and TsaB. TsaD likely plays a direct catalytic role in this reaction. This is tRNA N6-adenosine threonylcarbamoyltransferase from Streptococcus pneumoniae (strain JJA).